Consider the following 775-residue polypeptide: ADP-ribosylation factor GTPase-activating protein AGD4 (775 aa).

The region spanning 2–226 (ATFINLEDSP…IHQILTYAQQ (225 aa)) is the BAR domain. Residues 288 to 421 (EVIKQGYLLK…WVNKITKAIG (134 aa)) enclose the PH domain. In terms of domain architecture, Arf-GAP spans 467–603 (DDVSTILRGL…ALVIKDESEA (137 aa)). The segment at 482–505 (CAECNAPEPDWASLNLGVLLCIQC) adopts a C4-type zinc-finger fold. ANK repeat units lie at residues 682–711 (QGCS…DLNI) and 715–744 (HGRT…RPSI).

Expressed in roots, hypocotyls, cotyledons, leaf and shoot apical meristems and siliques.

Functionally, probable GTPase-activating protein. The protein is ADP-ribosylation factor GTPase-activating protein AGD4 (AGD4) of Arabidopsis thaliana (Mouse-ear cress).